Here is a 299-residue protein sequence, read N- to C-terminus: ATP phosphoribosyltransferase (299 aa).

The protein belongs to the ATP phosphoribosyltransferase family. Long subfamily. As to quaternary structure, equilibrium between an active dimeric form, an inactive hexameric form and higher aggregates. Interconversion between the various forms is largely reversible and is influenced by the natural substrates and inhibitors of the enzyme. It depends on Mg(2+) as a cofactor.

It is found in the cytoplasm. The catalysed reaction is 1-(5-phospho-beta-D-ribosyl)-ATP + diphosphate = 5-phospho-alpha-D-ribose 1-diphosphate + ATP. It participates in amino-acid biosynthesis; L-histidine biosynthesis; L-histidine from 5-phospho-alpha-D-ribose 1-diphosphate: step 1/9. With respect to regulation, feedback inhibited by histidine. Functionally, catalyzes the condensation of ATP and 5-phosphoribose 1-diphosphate to form N'-(5'-phosphoribosyl)-ATP (PR-ATP). Has a crucial role in the pathway because the rate of histidine biosynthesis seems to be controlled primarily by regulation of HisG enzymatic activity. The polypeptide is ATP phosphoribosyltransferase (Escherichia coli O81 (strain ED1a)).